The sequence spans 269 residues: 3'(2'),5'-bisphosphate nucleotidase CysQ (269 aa).

Mg(2+) contacts are provided by E69, D89, L91, D92, and D216. Residue E69 coordinates substrate. Residues 91 to 94 (LDGT) and D216 each bind substrate.

This sequence belongs to the inositol monophosphatase superfamily. CysQ family. Mg(2+) is required as a cofactor.

The protein localises to the cell inner membrane. The catalysed reaction is adenosine 3',5'-bisphosphate + H2O = AMP + phosphate. In terms of biological role, converts adenosine-3',5'-bisphosphate (PAP) to AMP. In Aggregatibacter actinomycetemcomitans (Actinobacillus actinomycetemcomitans), this protein is 3'(2'),5'-bisphosphate nucleotidase CysQ.